Consider the following 503-residue polypeptide: Aspartyl/glutamyl-tRNA(Asn/Gln) amidotransferase subunit B (503 aa).

It belongs to the GatB/GatE family. GatB subfamily. In terms of assembly, heterotrimer of A, B and C subunits.

It carries out the reaction L-glutamyl-tRNA(Gln) + L-glutamine + ATP + H2O = L-glutaminyl-tRNA(Gln) + L-glutamate + ADP + phosphate + H(+). It catalyses the reaction L-aspartyl-tRNA(Asn) + L-glutamine + ATP + H2O = L-asparaginyl-tRNA(Asn) + L-glutamate + ADP + phosphate + 2 H(+). Functionally, allows the formation of correctly charged Asn-tRNA(Asn) or Gln-tRNA(Gln) through the transamidation of misacylated Asp-tRNA(Asn) or Glu-tRNA(Gln) in organisms which lack either or both of asparaginyl-tRNA or glutaminyl-tRNA synthetases. The reaction takes place in the presence of glutamine and ATP through an activated phospho-Asp-tRNA(Asn) or phospho-Glu-tRNA(Gln). The sequence is that of Aspartyl/glutamyl-tRNA(Asn/Gln) amidotransferase subunit B from Mycobacterium avium (strain 104).